Here is a 279-residue protein sequence, read N- to C-terminus: Thermitase (279 aa).

Residue Asp-5 participates in Ca(2+) binding. In terms of domain architecture, Peptidase S8 spans 12-277 (QYGPQKIQAP…KGRVNAYKAV (266 aa)). Asp-38 functions as the Charge relay system in the catalytic mechanism. Residues Asp-47, Asp-57, Asp-60, Asp-62, Thr-64, and Gln-66 each coordinate Ca(2+). His-71 acts as the Charge relay system in catalysis. Ca(2+) is bound by residues Val-82, Asn-85, Thr-87, and Ile-89. Ala-173, Tyr-175, and Ala-178 together coordinate Na(+). 2 residues coordinate Ca(2+): Val-199 and Asp-201. Asp-201 contributes to the Na(+) binding site. Catalysis depends on Ser-225, which acts as the Charge relay system.

It belongs to the peptidase S8 family. Ca(2+) is required as a cofactor. The cofactor is Na(+).

Its subcellular location is the secreted. The enzyme catalyses Hydrolysis of proteins, including collagen.. This is Thermitase from Thermoactinomyces vulgaris.